We begin with the raw amino-acid sequence, 312 residues long: tRNA-dihydrouridine(16) synthase (312 aa).

FMN is bound by residues 7 to 9 and Q68; that span reads PMQ. The active-site Proton donor is C98. FMN-binding positions include K139, 200-202, and 224-225; these read NGE and GR.

This sequence belongs to the Dus family. DusC subfamily. It depends on FMN as a cofactor.

The catalysed reaction is 5,6-dihydrouridine(16) in tRNA + NADP(+) = uridine(16) in tRNA + NADPH + H(+). It carries out the reaction 5,6-dihydrouridine(16) in tRNA + NAD(+) = uridine(16) in tRNA + NADH + H(+). In terms of biological role, catalyzes the synthesis of 5,6-dihydrouridine (D), a modified base found in the D-loop of most tRNAs, via the reduction of the C5-C6 double bond in target uridines. Specifically modifies U16 in tRNAs. This is tRNA-dihydrouridine(16) synthase from Pasteurella multocida (strain Pm70).